The following is a 525-amino-acid chain: Averantin hydroxylase (525 aa).

Residues 36-56 (VLATFVAGIGALLLWTLTTVF) traverse the membrane as a helical segment. A glycan (N-linked (GlcNAc...) asparagine) is linked at N315. C462 contributes to the heme binding site.

It belongs to the cytochrome P450 family. The cofactor is heme.

It is found in the membrane. It carries out the reaction (1'S)-averantin + reduced [NADPH--hemoprotein reductase] + O2 = (1'S,5'R)-5'-hydroxyaverantin + oxidized [NADPH--hemoprotein reductase] + H2O. The enzyme catalyses (1'S)-averantin + reduced [NADPH--hemoprotein reductase] + O2 = (1'S,5'S)-5'-hydroxyaverantin + oxidized [NADPH--hemoprotein reductase] + H2O + H(+). Its pathway is mycotoxin biosynthesis. Its function is as follows. Averantin hydroxylase; part of the fragmented gene cluster that mediates the biosynthesis of dothistromin (DOTH), a polyketide toxin very similar in structure to the aflatoxin precursor, versicolorin B. The first step of the pathway is the conversion of acetate to norsolorinic acid (NOR) and requires the fatty acid synthase subunits hexA and hexB, as well as the polyketide synthase pksA. PksA combines a hexanoyl starter unit and 7 malonyl-CoA extender units to synthesize the precursor NOR. The hexanoyl starter unit is provided to the acyl-carrier protein (ACP) domain by the fungal fatty acid synthase hexA/hexB. The second step is the conversion of NOR to averantin (AVN) and requires the norsolorinic acid ketoreductase nor1, which catalyzes the dehydration of norsolorinic acid to form (1'S)-averantin. The cytochrome P450 monooxygenase avnA then catalyzes the hydroxylation of AVN to 5'hydroxyaverantin (HAVN). The next step is performed by adhA that transforms HAVN to averufin (AVF). Averufin might then be converted to hydroxyversicolorone by cypX and avfA. Hydroxyversicolorone is further converted versiconal hemiacetal acetate (VHA) by moxY. VHA is then the substrate for the versiconal hemiacetal acetate esterase est1 to yield versiconal (VAL). Versicolorin B synthase vbsA then converts VAL to versicolorin B (VERB) by closing the bisfuran ring. Then, the activity of the versicolorin B desaturase verB leads to versicolorin A (VERA). DotB, a predicted chloroperoxidase, may perform epoxidation of the A-ring of VERA. Alternatively, a cytochrome P450, such as cypX or avnA could catalyze this step. It is also possible that another, uncharacterized, cytochrome P450 enzyme is responsible for this step. Opening of the epoxide could potentially be achieved by the epoxide hydrolase epoA. However, epoA seems not to be required for DOTH biosynthesis, but other epoxide hydrolases may have the ability to complement this hydrolysis. Alternatively, opening of the epoxide ring could be achieved non-enzymatically. The next step is the deoxygenation of ring A to yield the 5,8-dihydroxyanthraquinone which is most likely catalyzed by the NADPH dehydrogenase encoded by ver1. The last stages of DOTH biosynthesis are proposed to involve hydroxylation of the bisfuran. OrdB and norB might have oxidative roles here. An alternative possibility is that cytochrome P450 monoogenases such as avnA and cypX might perform these steps in addition to previously proposed steps. This Dothistroma septosporum (strain NZE10 / CBS 128990) (Red band needle blight fungus) protein is Averantin hydroxylase.